The chain runs to 211 residues: Uridine kinase (211 aa).

15–22 (GGSGSGKT) lines the ATP pocket.

The protein belongs to the uridine kinase family.

It is found in the cytoplasm. It carries out the reaction uridine + ATP = UMP + ADP + H(+). The catalysed reaction is cytidine + ATP = CMP + ADP + H(+). The protein operates within pyrimidine metabolism; CTP biosynthesis via salvage pathway; CTP from cytidine: step 1/3. It participates in pyrimidine metabolism; UMP biosynthesis via salvage pathway; UMP from uridine: step 1/1. The sequence is that of Uridine kinase from Lactobacillus helveticus (strain DPC 4571).